A 326-amino-acid chain; its full sequence is Protein-arginine N-acetylglucosaminyltransferase NleB2 (326 aa).

UDP-N-acetyl-alpha-D-glucosamine is bound by residues 45–47, tyrosine 69, and 216–219; these read QWF and YLDM. The short motif at 218 to 220 is the DXD motif element; the sequence is DMD. Position 220 (aspartate 220) interacts with Mn(2+). Glutamate 250 (proton acceptor) is an active-site residue. Residues asparagine 317 and serine 319 each coordinate Mn(2+). UDP-N-acetyl-alpha-D-glucosamine-binding positions include serine 319 and 324 to 326; that span reads SSW.

The protein belongs to the glycosyltransferase NleB family. Mn(2+) serves as cofactor.

The protein resides in the secreted. Its subcellular location is the host cell. It carries out the reaction L-arginyl-[protein] + UDP-N-acetyl-alpha-D-glucosamine = N(omega)-(N-acetyl-beta-D-glucosaminyl)-L-arginyl-[protein] + UDP + H(+). Its function is as follows. Protein-arginine N-acetylglucosaminyltransferase effector that catalyzes the transfer of a single N-acetylglucosamine (GlcNAc) to a conserved arginine residue of host target proteins. In contrast to NleB1, not able to disrupt TNF signaling in infected cells. Shows a lower enzymatic activity than NleB1. The chain is Protein-arginine N-acetylglucosaminyltransferase NleB2 from Escherichia coli O127:H6 (strain E2348/69 / EPEC).